We begin with the raw amino-acid sequence, 206 residues long: Protein YmaB (206 aa).

The protein is Protein YmaB (ymaB) of Bacillus subtilis (strain 168).